Reading from the N-terminus, the 318-residue chain is Peptidyl-prolyl cis-trans isomerase CPR4 (318 aa).

The N-terminal stretch at 1-20 is a signal peptide; the sequence is MWLKSLLLCLYSLVLCQVHA. The PPIase cyclophilin-type domain occupies 55–225; sequence YFDPVSKSMK…HELRFLYFVL (171 aa). A glycan (N-linked (GlcNAc...) asparagine) is linked at Asn166. Residues 286–303 form a helical membrane-spanning segment; the sequence is ISRALMCLTVLGLCFIAY.

It is found in the membrane. The enzyme catalyses [protein]-peptidylproline (omega=180) = [protein]-peptidylproline (omega=0). Functionally, PPIases accelerate the folding of proteins. It catalyzes the cis-trans isomerization of proline imidic peptide bonds in oligopeptides. This chain is Peptidyl-prolyl cis-trans isomerase CPR4 (CPR4), found in Saccharomyces cerevisiae (strain ATCC 204508 / S288c) (Baker's yeast).